Reading from the N-terminus, the 191-residue chain is MITITDAAQSHFAKLLANQEEGTQIRVFVINPGTPTAECGVSYCPPDAVEATDTELKFEQLSAYIDELSKPYLEDAEIDFVTDQLGSQLTLKAPNAKMRKVDDNAPLMERVEYVLQSQINPQLAGHGGRVTLMEITPDALAILQFGGGCNGCSMVDVTLKEGIEKELLQKFPELKGVRDLTEHQRGEHSYY.

[4Fe-4S] cluster-binding residues include Cys149 and Cys152.

This sequence belongs to the NfuA family. Homodimer. [4Fe-4S] cluster is required as a cofactor.

In terms of biological role, involved in iron-sulfur cluster biogenesis. Binds a 4Fe-4S cluster, can transfer this cluster to apoproteins, and thereby intervenes in the maturation of Fe/S proteins. Could also act as a scaffold/chaperone for damaged Fe/S proteins. In Yersinia enterocolitica serotype O:8 / biotype 1B (strain NCTC 13174 / 8081), this protein is Fe/S biogenesis protein NfuA.